The primary structure comprises 356 residues: tRNA-specific 2-thiouridylase MnmA (356 aa).

ATP-binding positions include 6–13 and Leu32; that span reads AMSGGVDS. Cys101 serves as the catalytic Nucleophile. Cysteines 101 and 193 form a disulfide. Gly125 is an ATP binding site. Positions 143–145 are interaction with tRNA; the sequence is KDQ. The active-site Cysteine persulfide intermediate is Cys193.

The protein belongs to the MnmA/TRMU family.

It localises to the cytoplasm. The enzyme catalyses S-sulfanyl-L-cysteinyl-[protein] + uridine(34) in tRNA + AH2 + ATP = 2-thiouridine(34) in tRNA + L-cysteinyl-[protein] + A + AMP + diphosphate + H(+). Functionally, catalyzes the 2-thiolation of uridine at the wobble position (U34) of tRNA, leading to the formation of s(2)U34. The chain is tRNA-specific 2-thiouridylase MnmA from Mycobacteroides abscessus (strain ATCC 19977 / DSM 44196 / CCUG 20993 / CIP 104536 / JCM 13569 / NCTC 13031 / TMC 1543 / L948) (Mycobacterium abscessus).